The chain runs to 820 residues: Protein phosphatase 1 regulatory subunit 29 (820 aa).

A signal peptide spans 1–22 (MLRLGLCAAALLCVCRPGAVRA). Residues 23–397 (DCWLIEGDKG…APSTSTTTHY (375 aa)) lie on the Extracellular side of the membrane. Asn54 carries N-linked (GlcNAc...) asparagine glycosylation. 5 LRR repeats span residues 56–77 (TVHD…SLNR), 80–101 (NLTD…AFLG), 104–125 (SLQV…MLRG), 128–149 (RLQF…AFSE), and 152–173 (SLIS…TFAS). 3 N-linked (GlcNAc...) asparagine glycosylation sites follow: Asn80, Asn85, and Asn117. Residues 185-247 (NPFNCECDLF…ITVLQAKCRN (63 aa)) form the LRRCT domain. 2 N-linked (GlcNAc...) asparagine glycosylation sites follow: Asn205 and Asn247. The disordered stretch occupies residues 250-294 (LPARPVSHPTPYSTDAQREPDENSGFNPDEILSVEPPASSTTDAS). Residues 292 to 379 (DASAGPAIKL…FNHTCLTFTT (88 aa)) form the Fibronectin type-III domain. Residues 398-418 (IMTILGCLFGMVIVLGAVYYC) form a helical membrane-spanning segment. Residues 419 to 820 (LRKRRMQEEK…WKGVSAQQKL (402 aa)) lie on the Cytoplasmic side of the membrane. Disordered stretches follow at residues 508–527 (GAGG…LENG) and 589–612 (SATG…SSHH). 3 positions are modified to phosphoserine: Ser619, Ser668, and Ser672. The tract at residues 654–677 (TGLAKGDSKYIEKGSPLNSPLDRL) is disordered.

As to quaternary structure, interacts with PPP1CA.

Its subcellular location is the membrane. Its function is as follows. Inhibits phosphatase activity of protein phosphatase 1 (PP1) complexes. This Homo sapiens (Human) protein is Protein phosphatase 1 regulatory subunit 29 (ELFN2).